Consider the following 262-residue polypeptide: Type III pantothenate kinase (262 aa).

6 to 13 (DVGNTNAV) is an ATP binding site. Residues Y100 and 107 to 110 (GADR) contribute to the substrate site. Residue D109 is the Proton acceptor of the active site. D129 is a K(+) binding site. An ATP-binding site is contributed by T132. T184 lines the substrate pocket.

This sequence belongs to the type III pantothenate kinase family. Homodimer. The cofactor is NH4(+). It depends on K(+) as a cofactor.

Its subcellular location is the cytoplasm. The enzyme catalyses (R)-pantothenate + ATP = (R)-4'-phosphopantothenate + ADP + H(+). Its pathway is cofactor biosynthesis; coenzyme A biosynthesis; CoA from (R)-pantothenate: step 1/5. Functionally, catalyzes the phosphorylation of pantothenate (Pan), the first step in CoA biosynthesis. The polypeptide is Type III pantothenate kinase (Bacillus anthracis (strain A0248)).